The chain runs to 225 residues: Urease subunit alpha (225 aa).

A urease gamma region spans residues 1–102 (MRLTPKELDK…LVTIHNPIED (102 aa)). A urease beta region spans residues 103-225 (NGKLTPGEYI…ANAAQKHFIH (123 aa)).

In the N-terminal section; belongs to the urease gamma subunit family. The protein in the C-terminal section; belongs to the urease beta subunit family. Heterohexamer of 3 UreA (alpha) and 3 UreB (beta) subunits.

It is found in the cytoplasm. The catalysed reaction is urea + 2 H2O + H(+) = hydrogencarbonate + 2 NH4(+). It functions in the pathway nitrogen metabolism; urea degradation; CO(2) and NH(3) from urea (urease route): step 1/1. The polypeptide is Urease subunit alpha (Helicobacter hepaticus (strain ATCC 51449 / 3B1)).